We begin with the raw amino-acid sequence, 179 residues long: Large ribosomal subunit protein uL10 (179 aa).

It belongs to the universal ribosomal protein uL10 family. In terms of assembly, part of the ribosomal stalk of the 50S ribosomal subunit. The N-terminus interacts with L11 and the large rRNA to form the base of the stalk. The C-terminus forms an elongated spine to which L12 dimers bind in a sequential fashion forming a multimeric L10(L12)X complex.

Functionally, forms part of the ribosomal stalk, playing a central role in the interaction of the ribosome with GTP-bound translation factors. The polypeptide is Large ribosomal subunit protein uL10 (Symbiobacterium thermophilum (strain DSM 24528 / JCM 14929 / IAM 14863 / T)).